The sequence spans 246 residues: tRNA (guanine-N(1)-)-methyltransferase (246 aa).

An S-adenosyl-L-methionine-binding site is contributed by Gly114.

This sequence belongs to the RNA methyltransferase TrmD family. In terms of assembly, homodimer.

The protein localises to the cytoplasm. The enzyme catalyses guanosine(37) in tRNA + S-adenosyl-L-methionine = N(1)-methylguanosine(37) in tRNA + S-adenosyl-L-homocysteine + H(+). In terms of biological role, specifically methylates guanosine-37 in various tRNAs. This is tRNA (guanine-N(1)-)-methyltransferase from Novosphingobium aromaticivorans (strain ATCC 700278 / DSM 12444 / CCUG 56034 / CIP 105152 / NBRC 16084 / F199).